The chain runs to 78 residues: Large ribosomal subunit protein bL28 (78 aa).

Residues 1–20 form a disordered region; it reads MSRVCQVTGKGPVTGNNISH.

This sequence belongs to the bacterial ribosomal protein bL28 family.

This Pseudomonas fluorescens (strain ATCC BAA-477 / NRRL B-23932 / Pf-5) protein is Large ribosomal subunit protein bL28.